A 124-amino-acid chain; its full sequence is uncharacterized protein (124 aa).

Basic residues predominate over residues 62-72 (KKNKKQTFLKH). A disordered region spans residues 62–86 (KKNKKQTFLKHHQSDDHSENKVYKS). Residues 73-83 (HQSDDHSENKV) are compositionally biased toward basic and acidic residues. Positions 80–112 (ENKVYKSKKLEKKIQQLNKKKQLIDTKINFLKE) form a coiled coil.

This is an uncharacterized protein from Dictyostelium discoideum (Social amoeba).